The following is a 409-amino-acid chain: N-acetylglucosamine-6-phosphate deacetylase (409 aa).

Glu143 serves as a coordination point for a divalent metal cation. Substrate is bound at residue 154–155; it reads AH. His211 and His232 together coordinate a divalent metal cation. Residues 235-236, Arg243, and 269-272 each bind substrate; these read NA and DGIH. The active-site Proton donor/acceptor is the Asp294. 328–330 provides a ligand contact to substrate; the sequence is LSG.

The protein belongs to the metallo-dependent hydrolases superfamily. NagA family. It depends on a divalent metal cation as a cofactor.

It catalyses the reaction N-acetyl-D-glucosamine 6-phosphate + H2O = D-glucosamine 6-phosphate + acetate. It functions in the pathway amino-sugar metabolism; N-acetylneuraminate degradation. Hydrolyzes the N-glycolyl group from N-glycolylglucosamine 6-phosphate (GlcNGc-6-P) in the N-glycolylneuraminic acid (Neu5Gc) degradation pathway. The sequence is that of N-acetylglucosamine-6-phosphate deacetylase (AMDHD2) from Bos taurus (Bovine).